We begin with the raw amino-acid sequence, 161 residues long: MPSFDIVSKTDLAEVQNAIDGVLRELQNRFDFKGSKSTIERKENEITLHTEDKTKLSQLQEMVKGYFVRRKLDPGALDWGREENAAGGTLRQVVTVRQGIDQDLAKKIVKAVKDSKMKVQASIQGDELRITGKKIDDLQECIRLVKGLKIEQPLQYVNFRD.

Belongs to the YajQ family.

Functionally, nucleotide-binding protein. In Rhodospirillum centenum (strain ATCC 51521 / SW), this protein is Nucleotide-binding protein RC1_3464.